The following is a 259-amino-acid chain: tRNA pseudouridine synthase A (259 aa).

The Nucleophile role is filled by Asp-51. Tyr-109 serves as a coordination point for substrate.

The protein belongs to the tRNA pseudouridine synthase TruA family. As to quaternary structure, homodimer.

It carries out the reaction uridine(38/39/40) in tRNA = pseudouridine(38/39/40) in tRNA. In terms of biological role, formation of pseudouridine at positions 38, 39 and 40 in the anticodon stem and loop of transfer RNAs. The polypeptide is tRNA pseudouridine synthase A (Nitrosococcus oceani (strain ATCC 19707 / BCRC 17464 / JCM 30415 / NCIMB 11848 / C-107)).